The primary structure comprises 115 residues: MARVKRGNIARKRRNKILRLARGFRGSNGSLFRTANQRVMKALCNAYRDRRRRKRDFRRLWIARINAASRLNGLSYSRLVGSLKKANIKLNRKMLALLALADPTSFANVVVVAKS.

Belongs to the bacterial ribosomal protein bL20 family.

The protein localises to the plastid. The protein resides in the organellar chromatophore. Functionally, binds directly to 23S ribosomal RNA and is necessary for the in vitro assembly process of the 50S ribosomal subunit. It is not involved in the protein synthesizing functions of that subunit. The chain is Large ribosomal subunit protein bL20c from Paulinella chromatophora.